We begin with the raw amino-acid sequence, 250 residues long: DNA repair protein RecO (250 aa).

Belongs to the RecO family.

Its function is as follows. Involved in DNA repair and RecF pathway recombination. The protein is DNA repair protein RecO of Staphylococcus aureus (strain bovine RF122 / ET3-1).